Here is a 2431-residue protein sequence, read N- to C-terminus: Nucleoprotein TPR (2431 aa).

The interval 1–48 is disordered; the sequence is MTSGGSASRSGHRGVPMTSRGFDGSRRGSLRRAGARETASEAADGAAP. Residues 77 to 87 form a sufficient for interaction with TPR region; sequence AVLQQVLERPE. The necessary for interaction with HSF1 stretch occupies residues 88–191; sequence LNKLPKSTQN…GIQSQFTRAK (104 aa). Residues 98–444 adopt a coiled-coil conformation; it reads KLEKFLAEQQ…SATKRKGAIL (347 aa). 3 positions are modified to N6-acetyllysine: Lys-326, Lys-386, and Lys-419. Ser-453 is subject to Phosphoserine. A coiled-coil region spans residues 486–678; the sequence is EKQENKRINK…ESRQHQMQLV (193 aa). 3 positions are modified to N6-acetyllysine: Lys-502, Lys-531, and Lys-551. Residues 511–587 are necessary for association to the NPC; the sequence is LKRQREEYER…LMELEEARGN (77 aa). Ser-596, Ser-597, and Ser-706 each carry phosphoserine. Residues 736 to 1246 adopt a coiled-coil conformation; that stretch reads STEAIEAKAA…IEKLSDKVVT (511 aa). An N6-acetyllysine mark is found at Lys-787, Lys-797, Lys-822, and Lys-829. Residues 989–998 show a composition bias toward polar residues; that stretch reads LASQSTQRTG. Residues 989–1011 form a disordered region; it reads LASQSTQRTGKGQPGDRDDVDDL. Residues 1002-1011 show a composition bias toward basic and acidic residues; the sequence is PGDRDDVDDL. Ser-1259 bears the Phosphoserine mark. Coiled coils occupy residues 1289 to 1494 and 1547 to 1700; these read EVAQ…LDAK and VQEM…QRDE. Positions 1292–1394 are necessary for interaction with HSF1; it reads QVESLRYRQR…NAELSEKSGM (103 aa). A compositionally biased stretch (basic and acidic residues) spans 1689 to 1701; that stretch reads EHQERHLEQRDEP. A disordered region spans residues 1689–1744; sequence EHQERHLEQRDEPQEPTNKAPEQQRQITLKTTPASGERGIASTSDPPTANIKPTPV. A compositionally biased stretch (polar residues) spans 1703 to 1722; sequence EPTNKAPEQQRQITLKTTPA. Lys-1760 is subject to N6-acetyllysine. Thr-1762 is modified (phosphothreonine). A compositionally biased stretch (polar residues) spans 1873 to 1898; it reads SSPVERPSTSTAVFGTVSATPSSSLP. Residues 1873–2193 are disordered; the sequence is SSPVERPSTS…TPGIGGMQQH (321 aa). The segment at 1882–1937 is sufficient and essential for mediating its nuclear import; the sequence is STAVFGTVSATPSSSLPKRTREEEEDSTMEAGDQVSEDTVEMPLPKKLKMVTPVGT. Positions 1937–1951 are enriched in acidic residues; it reads TEEEVMAEESTDGEA. Positions 1954–1963 are enriched in polar residues; it reads QAYNQDSQDS. Phosphoserine is present on Ser-1963. Residues 1994–2005 show a composition bias toward low complexity; that stretch reads QSDQQTTSSQDG. 2 stretches are compositionally biased toward acidic residues: residues 2016–2057 and 2067–2088; these read DSDD…EDSN and DGYEADDAEGGDGTDPGTETEE. Polar residues predominate over residues 2100–2132; sequence ADSQNSGEGNTSAAESSFSQEVAREQQPTSASE. 5 positions are modified to phosphoserine: Ser-2102, Ser-2105, Ser-2116, Ser-2118, and Ser-2141. Arg-2174 and Arg-2179 each carry omega-N-methylarginine. 2 positions are modified to phosphothreonine: Thr-2184 and Thr-2205. Position 2223 is a phosphoserine (Ser-2223). At Arg-2231 the chain carries Omega-N-methylarginine. The span at 2295 to 2312 shows a compositional bias: polar residues; sequence ESTTSDASEHASQSVPMV. The segment at 2295–2431 is disordered; that stretch reads ESTTSDASEH…RGGINRGNIN (137 aa). Residues 2313–2325 are compositionally biased toward low complexity; sequence TTSTGTLSTTNET. Acidic residues predominate over residues 2327-2340; the sequence is AGDDGDEVFVEAES. Positions 2341–2351 are enriched in low complexity; the sequence is EGISSEAGLEI. Residues 2353–2367 show a composition bias toward acidic residues; that stretch reads SQQEEEPVQASDESD. Positions 2368-2388 are enriched in low complexity; sequence LPSTSQDPPSSSSVDTSSSQP. 3 positions are modified to asymmetric dimethylarginine: Arg-2411, Arg-2413, and Arg-2422. Over residues 2420–2431 the composition is skewed to gly residues; sequence GGRGGINRGNIN.

Belongs to the TPR family. Homodimer. Part of the nuclear pore complex (NPC). Associates with the XPO1/CRM1-mediated nuclear export complex, the Importin alpha/Importin beta receptor and the dynein 1 complex. Interacts (via C-terminal domain) with the KPNB1; the interaction occurs in a RanGTP-dependent manner. Interacts (via C-terminal region and phosphorylated form) with MAPK1/ERK2 (via phosphorylated form); the interaction requires dimerization of MAPK1/ERK2 and increases following EGF stimulation. Interacts with MAPK3/ERK1; the interaction increases following EGF stimulation. Interacts (via coiled coil region) with NUP153; the interaction is direct. Interacts with HSF1; the interaction increases in a stress-responsive manner and stimulates export of stress-induced HSP70 mRNA. Interacts with huntingtin/HTT; the interaction is inhibited by aggregated huntingtin/HTT forms with expanded polyglutamine stretch. Interacts with MAD1L1 (via N-terminal region), MAD2L1, and TTK; the interactions occurs in a microtubule-independent manner. Interacts (via middle region) with DYNLL1. Interacts with DCTN1, dynein, NUP153 and tubulin. Interacts with MTA1. Interacts with IFI204 (via C-terminal region). Interacts with IFI203. Interacts with ZC3HC1; this interaction mediates ZC3HC1 nuclear envelopes (NE)-association but also required for proper positioning of a substantial amount of TPR at the nuclear basket (NB). In terms of processing, phosphorylated. Phosphorylation occurs on serine and threonine residues (comprised in the C-terminal region) by MAPK1/ERK2 and stabilizes the interaction between these two proteins. Expressed in the heart, liver, kidney, spleen, lung and skeletal muscles.

The protein resides in the nucleus. It is found in the nucleus membrane. It localises to the nucleus envelope. The protein localises to the nuclear pore complex. Its subcellular location is the cytoplasm. The protein resides in the cytoskeleton. It is found in the spindle. It localises to the chromosome. The protein localises to the centromere. Its subcellular location is the kinetochore. In terms of biological role, component of the nuclear pore complex (NPC), a complex required for the trafficking across the nuclear envelope. Functions as a scaffolding element in the nuclear phase of the NPC essential for normal nucleocytoplasmic transport of proteins and mRNAs, plays a role in the establishment of nuclear-peripheral chromatin compartmentalization in interphase, and in the mitotic spindle checkpoint signaling during mitosis. Involved in the quality control and retention of unspliced mRNAs in the nucleus; in association with NUP153, regulates the nuclear export of unspliced mRNA species bearing constitutive transport element (CTE) in a NXF1- and KHDRBS1-independent manner. Negatively regulates both the association of CTE-containing mRNA with large polyribosomes and translation initiation. Does not play any role in Rev response element (RRE)-mediated export of unspliced mRNAs. Implicated in nuclear export of mRNAs transcribed from heat shock gene promoters; associates both with chromatin in the HSP70 promoter and with mRNAs transcribed from this promoter under stress-induced conditions. Plays a limited role in the regulation of nuclear protein export. Modulates the nucleocytoplasmic transport of activated MAPK1/ERK2 and huntingtin/HTT and may serve as a docking site for the XPO1/CRM1-mediated nuclear export complex. Also plays a role as a structural and functional element of the perinuclear chromatin distribution; involved in the formation and/or maintenance of NPC-associated perinuclear heterochromatin exclusion zones (HEZs). Finally, acts as a spatial regulator of the spindle-assembly checkpoint (SAC) response ensuring a timely and effective recruitment of spindle checkpoint proteins like MAD1L1 and MAD2L1 to unattached kinetochore during the metaphase-anaphase transition before chromosome congression. Its N-terminus is involved in activation of oncogenic kinases. This is Nucleoprotein TPR from Mus musculus (Mouse).